The sequence spans 246 residues: Large ribosomal subunit protein uL2 (246 aa).

The tract at residues 197–226 (SPYAHPHGGGSHPKGGTPVPKTAPPGQKVG) is disordered.

This sequence belongs to the universal ribosomal protein uL2 family. In terms of assembly, part of the 50S ribosomal subunit. Forms a bridge to the 30S subunit in the 70S ribosome.

One of the primary rRNA binding proteins. Required for association of the 30S and 50S subunits to form the 70S ribosome, for tRNA binding and peptide bond formation. It has been suggested to have peptidyltransferase activity; this is somewhat controversial. Makes several contacts with the 16S rRNA in the 70S ribosome. The sequence is that of Large ribosomal subunit protein uL2 from Pyrobaculum islandicum (strain DSM 4184 / JCM 9189 / GEO3).